Consider the following 256-residue polypeptide: Large ribosomal subunit protein uL2 (256 aa).

The disordered stretch occupies residues 208 to 230 (EHPHGGGNHQHIGKASTVKRGTS).

Belongs to the universal ribosomal protein uL2 family. As to expression, in larvae tissues examined: gut, brain imaginal disk, salivary glands, fat body, muscles, epidermis and trachaea.

It is found in the cytoplasm. In Drosophila melanogaster (Fruit fly), this protein is Large ribosomal subunit protein uL2 (RpL8).